The chain runs to 142 residues: UPF0310 protein PYRAB08750 (142 aa).

The protein belongs to the UPF0310 family.

This is UPF0310 protein PYRAB08750 from Pyrococcus abyssi (strain GE5 / Orsay).